We begin with the raw amino-acid sequence, 986 residues long: Isoleucine--tRNA ligase (986 aa).

Positions 534–538 (EMHKS) match the 'KMSKS' region motif. Residue Lys-537 participates in ATP binding.

This sequence belongs to the class-I aminoacyl-tRNA synthetase family. IleS type 2 subfamily. In terms of assembly, monomer. The cofactor is Zn(2+).

It localises to the cytoplasm. The catalysed reaction is tRNA(Ile) + L-isoleucine + ATP = L-isoleucyl-tRNA(Ile) + AMP + diphosphate. Catalyzes the attachment of isoleucine to tRNA(Ile). As IleRS can inadvertently accommodate and process structurally similar amino acids such as valine, to avoid such errors it has two additional distinct tRNA(Ile)-dependent editing activities. One activity is designated as 'pretransfer' editing and involves the hydrolysis of activated Val-AMP. The other activity is designated 'posttransfer' editing and involves deacylation of mischarged Val-tRNA(Ile). This is Isoleucine--tRNA ligase (ileS) from Saccharolobus solfataricus (strain ATCC 35092 / DSM 1617 / JCM 11322 / P2) (Sulfolobus solfataricus).